Here is a 612-residue protein sequence, read N- to C-terminus: FAD-linked oxidoreductase easE (612 aa).

In terms of domain architecture, FAD-binding PCMH-type spans 129–313 (HQGRIPLYSA…TRATMRVFPD (185 aa)).

This sequence belongs to the oxygen-dependent FAD-linked oxidoreductase family. FAD serves as cofactor.

It functions in the pathway alkaloid biosynthesis; ergot alkaloid biosynthesis. Functionally, FAD-linked oxidoreductase; part of the gene cluster that mediates the biosynthesis of fungal ergot alkaloid. DmaW catalyzes the first step of ergot alkaloid biosynthesis by condensing dimethylallyl diphosphate (DMAP) and tryptophan to form 4-dimethylallyl-L-tryptophan. The second step is catalyzed by the methyltransferase easF that methylates 4-dimethylallyl-L-tryptophan in the presence of S-adenosyl-L-methionine, resulting in the formation of 4-dimethylallyl-L-abrine. The catalase easC and the FAD-dependent oxidoreductase easE then transform 4-dimethylallyl-L-abrine to chanoclavine-I which is further oxidized by easD in the presence of NAD(+), resulting in the formation of chanoclavine-I aldehyde. Chanoclavine-I aldehyde is the precursor of ergoamides and ergopeptines in Clavicipitaceae, and clavine-type alcaloids such as fumiclavine in Trichocomaceae. However, the metabolites downstream of chanoclavine-I aldehyde in Arthrodermataceae have not been identified yet. The polypeptide is FAD-linked oxidoreductase easE (Arthroderma otae (strain ATCC MYA-4605 / CBS 113480) (Microsporum canis)).